The primary structure comprises 343 residues: Armadillo repeat-containing protein 10 (343 aa).

The chain crosses the membrane as a helical span at residues 5-27; sequence RGAGWVAAGLLLGAGACYCIYRL. The disordered stretch occupies residues 43–83; that stretch reads SKSAGALEEGTSEGQLCGRSARPQTGGTWESQWSKTSQPED. Serine 45 carries the phosphoserine modification. Phosphothreonine is present on glutamate 50. The span at 64–82 shows a compositional bias: polar residues; sequence RPQTGGTWESQWSKTSQPE. Threonine 85 bears the Phosphothreonine mark. An ARM repeat occupies 138–180; it reads GGIPIVANKINHSNQSIKEKALNALNNLSVNVENQIKIKIYIS.

Interacts with the DNA-binding domain of p53/TP53. In terms of tissue distribution, expressed in all tissues tested with higher expression in placenta, liver, kidney, heart and brain.

The protein localises to the endoplasmic reticulum membrane. It localises to the mitochondrion outer membrane. In terms of biological role, may play a role in cell survival and cell growth. May suppress the transcriptional activity of p53/TP53. The protein is Armadillo repeat-containing protein 10 (ARMC10) of Homo sapiens (Human).